Reading from the N-terminus, the 356-residue chain is Phosphate acyltransferase (356 aa).

The protein belongs to the PlsX family. Homodimer. Probably interacts with PlsY.

Its subcellular location is the cytoplasm. It catalyses the reaction a fatty acyl-[ACP] + phosphate = an acyl phosphate + holo-[ACP]. Its pathway is lipid metabolism; phospholipid metabolism. Catalyzes the reversible formation of acyl-phosphate (acyl-PO(4)) from acyl-[acyl-carrier-protein] (acyl-ACP). This enzyme utilizes acyl-ACP as fatty acyl donor, but not acyl-CoA. The chain is Phosphate acyltransferase from Stutzerimonas stutzeri (strain A1501) (Pseudomonas stutzeri).